The sequence spans 290 residues: Acetyl-coenzyme A carboxylase carboxyl transferase subunit beta (290 aa).

The 263-residue stretch at 28–290 (VMTKCPQCKK…KGGEEGWWRN (263 aa)) folds into the CoA carboxyltransferase N-terminal domain. Residues Cys-32, Cys-35, Cys-51, and Cys-54 each contribute to the Zn(2+) site. The C4-type zinc-finger motif lies at 32–54 (CPQCKKIMYTKELIKNLRVCLSC).

The protein belongs to the AccD/PCCB family. Acetyl-CoA carboxylase is a heterohexamer composed of biotin carboxyl carrier protein (AccB), biotin carboxylase (AccC) and two subunits each of ACCase subunit alpha (AccA) and ACCase subunit beta (AccD). Zn(2+) is required as a cofactor.

The protein resides in the cytoplasm. It catalyses the reaction N(6)-carboxybiotinyl-L-lysyl-[protein] + acetyl-CoA = N(6)-biotinyl-L-lysyl-[protein] + malonyl-CoA. The protein operates within lipid metabolism; malonyl-CoA biosynthesis; malonyl-CoA from acetyl-CoA: step 1/1. Component of the acetyl coenzyme A carboxylase (ACC) complex. Biotin carboxylase (BC) catalyzes the carboxylation of biotin on its carrier protein (BCCP) and then the CO(2) group is transferred by the transcarboxylase to acetyl-CoA to form malonyl-CoA. The polypeptide is Acetyl-coenzyme A carboxylase carboxyl transferase subunit beta (Geobacillus kaustophilus (strain HTA426)).